The sequence spans 178 residues: Membrane-spanning protein YciB (178 aa).

A run of 5 helical transmembrane segments spans residues Ile22 to Ile42, Leu52 to Ser72, Trp76 to Ile96, Leu121 to Phe141, and Ile151 to Phe171.

Belongs to the YciB family.

Its subcellular location is the cell membrane. Its function is as follows. Plays a role in cell envelope biogenesis, maintenance of cell envelope integrity and membrane homeostasis. This chain is Membrane-spanning protein YciB, found in Buchnera aphidicola subsp. Baizongia pistaciae (strain Bp).